A 235-amino-acid polypeptide reads, in one-letter code: Regulator of G-protein signaling 18 (235 aa).

The residue at position 49 (serine 49) is a Phosphoserine. The region spanning 86-202 is the RGS domain; the sequence is SFDKLLSHRD…LKSDIYLDLM (117 aa). A phosphoserine mark is found at serine 216 and serine 218.

In terms of tissue distribution, expressed in peripheral leukocytes, bone marrow, platelet, spleen and fetal liver.

The protein localises to the cytoplasm. Functionally, inhibits signal transduction by increasing the GTPase activity of G protein alpha subunits thereby driving them into their inactive GDP-bound form. Binds to G(i) alpha-1, G(i) alpha-2, G(i) alpha-3 and G(q) alpha. This Homo sapiens (Human) protein is Regulator of G-protein signaling 18 (RGS18).